A 1228-amino-acid chain; its full sequence is MKTWGSMRSIFMHADGVDWMLMGLGLIGAVGDGFITPILFFITAMLLNDFGSFSFNDETFMQPISKNALAMLYVACASWVICFLEGYCWTRTGERQAAKMRERYLRAVLRQDVGYFDLHVTSTSDIITSVSSDSLVIQDFLSEKLPNILMNASAFVGSYIVGFMLLWRLTIVGFPFIILLLIPGLMYGRALIGISRKIREEYNEAGSIAEQAISSVRTVYAFVSEKKMIEKFSDALQGSVKLGLRQGLAKGIAIGSNGIVYAIWGFLTWYGSRMVMNYGYKGGTVSTVTVCVTFGGTALGQALSNLKYFSEAFVAGERIQKMIKRVPDIDSDNLNGHILETIRGEVEFNNVKCKYPSRPETLIFDDLCLKIPSGKTVALVGGSGSGKSTVISLLQRFYDPNEGDILIDSVSINNMQVKWLRSQMGMVSQEPSLFATSIKENILFGKEDASFDEVVEAAKASNAHNFISQFPHGYQTQVGERGVHMSGGQKQRIAIARALIKSPIILLLDEATSALDLESERVVQEALDNASVGRTTIVIAHRLSTIRNADIICVLHNGCIVETGSHDKLMEIDGKYTSLVRLQQMKNEESCDNTSVGVKEGRVSSLRNDLDYNPRDLAHSMSSSIVTNLSDSIPQDKKPLVPSFKRLMAMNRPEWKHALCGCLSASLGGAVQPIYAYSSGLMISVFFLTNHEQIKENTRIYVLLFFGLALFTFFTSISQQYSFSYMGEYLTKRIREQMLSKILTFEVNWFDEEENSSGAICSRLAKDANVVRSLVGERMSLLVQTISTVMVACTIGLVIAWRFTIVMISVQPVIIVCYYIQRVLLKNMSKKAIIAQDESSKLAAEAVSNIRTITTFSSQERIMKLLERVQEGPRRESARQSWLAGIMLGTTQSLITCTSALNFWYGGKLIADGKMVSKAFFELFLIFKTTGRAIAEAGTMTTDLAKGSNSVDSVFTVLDRRTTIEPENPDGYILEKIKGQITFLNVDFAYPTRPNMVIFNNFSIEIHEGKSTAIVGPSRSGKSTVIGLIERFYDPLQGIVKIDGRDIRSYHLRSLRQHMSLVSQEPTLFAGTIRENIMYGRASNKIDESEIIEAGKTANAHEFITSLSDGYDTYCGDRGVQLSGGQKQRIAIARTILKNPSILLLDEATSALDSQSERVVQDALEHVMVGKTSVVIAHRLSTIQNCDTIAVLDKGKVVESGTHASLLAKGPTGSYFSLVSLQRKVRYV.

Helical transmembrane passes span 22 to 42 (MGLG…LFFI), 69 to 89 (LAML…GYCW), 145 to 167 (LPNI…MLLW), 171 to 193 (IVGF…ALIG), 251 to 271 (GIAI…TWYG), and 283 to 303 (GTVS…GQAL). The region spanning 22–311 (MGLGLIGAVG…ALSNLKYFSE (290 aa)) is the ABC transmembrane type-1 1 domain. In terms of domain architecture, ABC transporter 1 spans 346 to 582 (VEFNNVKCKY…DGKYTSLVRL (237 aa)). An ATP-binding site is contributed by 381–388 (GGSGSGKS). N-linked (GlcNAc...) asparagine glycans are attached at residues Asn-529, Asn-593, and Asn-628. In terms of domain architecture, ABC transmembrane type-1 2 spans 658–946 (ALCGCLSASL…AGTMTTDLAK (289 aa)). The next 2 membrane-spanning stretches (helical) occupy residues 667–687 (LGGA…SVFF) and 700–720 (IYVL…ISQQ). Asn-755 carries N-linked (GlcNAc...) asparagine glycosylation. 2 helical membrane-spanning segments follow: residues 781 to 801 (LLVQ…VIAW) and 805 to 825 (IVMI…RVLL). Asn-827 carries an N-linked (GlcNAc...) asparagine glycan. 2 consecutive transmembrane segments (helical) span residues 881–901 (SWLA…TSAL) and 920–940 (FFEL…AGTM). Residues 981–1219 (ITFLNVDFAY…GPTGSYFSLV (239 aa)) form the ABC transporter 2 domain. Residue Asn-1001 is glycosylated (N-linked (GlcNAc...) asparagine). ATP is bound at residue 1016–1023 (GPSRSGKS).

Belongs to the ABC transporter superfamily. ABCB family. Multidrug resistance exporter (TC 3.A.1.201) subfamily.

The protein localises to the membrane. This chain is ABC transporter B family member 16 (ABCB16), found in Arabidopsis thaliana (Mouse-ear cress).